A 126-amino-acid chain; its full sequence is uncharacterized protein (126 aa).

This is an uncharacterized protein from Mycoplasmopsis pulmonis (strain UAB CTIP) (Mycoplasma pulmonis).